A 130-amino-acid polypeptide reads, in one-letter code: Sirohydrochlorin cobaltochelatase (130 aa).

The Proton acceptor role is filled by H12. H12 contributes to the Co(2+) binding site. Residue H12 participates in Ni(2+) binding. Substrate-binding positions include E48 and 73 to 78 (LASGVH). H78 contacts Co(2+). H78 lines the Ni(2+) pocket.

This sequence belongs to the CbiX family. CbiXS subfamily. As to quaternary structure, homotetramer; dimer of dimers.

The enzyme catalyses Co-sirohydrochlorin + 2 H(+) = sirohydrochlorin + Co(2+). It carries out the reaction Ni-sirohydrochlorin + 2 H(+) = sirohydrochlorin + Ni(2+). It functions in the pathway cofactor biosynthesis; adenosylcobalamin biosynthesis; cob(II)yrinate a,c-diamide from sirohydrochlorin (anaerobic route): step 1/10. Functionally, catalyzes the insertion of Co(2+) into sirohydrochlorin as part of the anaerobic pathway to cobalamin biosynthesis. Involved in the biosynthesis of the unique nickel-containing tetrapyrrole coenzyme F430, the prosthetic group of methyl-coenzyme M reductase (MCR), which plays a key role in methanogenesis and anaerobic methane oxidation. Catalyzes the insertion of Ni(2+) into sirohydrochlorin to yield Ni-sirohydrochlorin. This Methanosarcina barkeri (strain Fusaro / DSM 804) protein is Sirohydrochlorin cobaltochelatase.